We begin with the raw amino-acid sequence, 368 residues long: D-amino-acid oxidase (368 aa).

Residues Ala11, Ser14, Lys35, His36, Cys46, Ser47, Gly51, Asn53, and Phe174 each coordinate FAD. A disulfide bond links Cys230 and Cys285. Residues Tyr244, Tyr260, and Arg308 each contribute to the (R)-lactate site. Residues Tyr244, Tyr260, and Arg308 each coordinate anthranilate. FAD-binding residues include Arg308, Gly334, Gly337, Tyr338, and Gln339. The Microbody targeting signal signature appears at 366–368 (ARL).

The protein belongs to the DAMOX/DASOX family. In terms of assembly, homotetramer. Requires FAD as cofactor. In terms of processing, the disulfide bond might contribute to the high thermal stability of the protein.

It localises to the peroxisome matrix. It catalyses the reaction a D-alpha-amino acid + O2 + H2O = a 2-oxocarboxylate + H2O2 + NH4(+). The enzyme catalyses D-alanine + O2 + H2O = pyruvate + H2O2 + NH4(+). The catalysed reaction is D-glutamate + O2 + H2O = H2O2 + 2-oxoglutarate + NH4(+). It carries out the reaction D-serine + O2 + H2O = 3-hydroxypyruvate + H2O2 + NH4(+). It catalyses the reaction D-phenylalanine + O2 + H2O = 3-phenylpyruvate + H2O2 + NH4(+). The enzyme catalyses D-arginine + O2 + H2O = 5-guanidino-2-oxopentanoate + H2O2 + NH4(+). The catalysed reaction is D-methionine + O2 + H2O = 4-methylsulfanyl-2-oxobutanoate + H2O2 + NH4(+). It carries out the reaction D-leucine + O2 + H2O = 4-methyl-2-oxopentanoate + H2O2 + NH4(+). It catalyses the reaction D-lysine + O2 + H2O = 6-amino-2-oxohexanoate + H2O2 + NH4(+). The enzyme catalyses D-valine + O2 + H2O = 3-methyl-2-oxobutanoate + H2O2 + NH4(+). The catalysed reaction is D-histidine + O2 + H2O = 3-(imidazol-5-yl)pyruvate + H2O2 + NH4(+). It carries out the reaction D-glutamine + O2 + H2O = 2-oxoglutaramate + H2O2 + NH4(+). It catalyses the reaction D-isoleucine + O2 + H2O = (R)-3-methyl-2-oxopentanoate + H2O2 + NH4(+). The enzyme catalyses D-allo-isoleucine + O2 + H2O = (S)-3-methyl-2-oxopentanoate + H2O2 + NH4(+). The catalysed reaction is D-threonine + O2 + H2O = (S)-3-hydroxy-2-oxobutanoate + H2O2 + NH4(+). It carries out the reaction D-asparagine + O2 + H2O = 2-oxosuccinamate + H2O2 + NH4(+). It catalyses the reaction D-tryptophan + O2 + H2O = indole-3-pyruvate + H2O2 + NH4(+). The enzyme catalyses D-tyrosine + O2 + H2O = 3-(4-hydroxyphenyl)pyruvate + H2O2 + NH4(+). With respect to regulation, partially inhibited by benzoate, crotonate, and D-malate. In terms of biological role, catalyzes the oxidative deamination of D-amino acids with broad substrate specificity. Enables the organism to utilize D-amino acids as a source of nutrients. Unusually, has high activity on D-glutamate. This chain is D-amino-acid oxidase, found in Talaromyces emersonii (Thermophilic fungus).